Reading from the N-terminus, the 267-residue chain is MNDINPAFVMPDVQSSVDTRQIVIQRVGVKGVRYPLTLKTPAGAVGTVGTFNMDVRLPADQKGTHMSRFVALLEENRAPLDLAAFRALVDDMLVRLEADAGRIEVSFPYFITKTAPVSGVQSLLDYEVTLVAEARDGQTRMFMTALVPVTSLCPCSKKISQYGAHNQRSHITMRVELAGDLDVEALVRMAEEEASCELWGLLKRPDEKFVTERAYENPKFVEDLVRDIAMRLNADDRIVAYTLEAENFESIHNHSAYAVIEHDKRHQ.

Belongs to the GTP cyclohydrolase IV family.

The catalysed reaction is GTP + H2O = 7,8-dihydroneopterin 3'-triphosphate + formate + H(+). It functions in the pathway cofactor biosynthesis; 7,8-dihydroneopterin triphosphate biosynthesis; 7,8-dihydroneopterin triphosphate from GTP: step 1/1. Functionally, converts GTP to 7,8-dihydroneopterin triphosphate. The protein is GTP cyclohydrolase FolE2 2 of Cupriavidus metallidurans (strain ATCC 43123 / DSM 2839 / NBRC 102507 / CH34) (Ralstonia metallidurans).